The sequence spans 337 residues: Ketol-acid reductoisomerase (NADP(+)) (337 aa).

The 181-residue stretch at alanine 2–threonine 182 folds into the KARI N-terminal Rossmann domain. Residues tyrosine 25–glutamine 28, serine 51, serine 53, and aspartate 83–glutamine 86 each bind NADP(+). Histidine 108 is an active-site residue. Position 134 (glycine 134) interacts with NADP(+). The KARI C-terminal knotted domain maps to threonine 183–isoleucine 328. Mg(2+) is bound by residues aspartate 191, glutamate 195, glutamate 227, and glutamate 231. Substrate is bound at residue serine 252.

The protein belongs to the ketol-acid reductoisomerase family. The cofactor is Mg(2+).

It catalyses the reaction (2R)-2,3-dihydroxy-3-methylbutanoate + NADP(+) = (2S)-2-acetolactate + NADPH + H(+). It carries out the reaction (2R,3R)-2,3-dihydroxy-3-methylpentanoate + NADP(+) = (S)-2-ethyl-2-hydroxy-3-oxobutanoate + NADPH + H(+). It functions in the pathway amino-acid biosynthesis; L-isoleucine biosynthesis; L-isoleucine from 2-oxobutanoate: step 2/4. The protein operates within amino-acid biosynthesis; L-valine biosynthesis; L-valine from pyruvate: step 2/4. Involved in the biosynthesis of branched-chain amino acids (BCAA). Catalyzes an alkyl-migration followed by a ketol-acid reduction of (S)-2-acetolactate (S2AL) to yield (R)-2,3-dihydroxy-isovalerate. In the isomerase reaction, S2AL is rearranged via a Mg-dependent methyl migration to produce 3-hydroxy-3-methyl-2-ketobutyrate (HMKB). In the reductase reaction, this 2-ketoacid undergoes a metal-dependent reduction by NADPH to yield (R)-2,3-dihydroxy-isovalerate. This Sorangium cellulosum (strain So ce56) (Polyangium cellulosum (strain So ce56)) protein is Ketol-acid reductoisomerase (NADP(+)).